The primary structure comprises 302 residues: GrpE protein homolog 1, mitochondrial (302 aa).

The N-terminal 39 residues, 1–39, are a transit peptide targeting the mitochondrion; it reads MLVSRVLSRVSRSAGLRSSFSSVVTPKRNQIPIVASRFH. Residues 77 to 97 form a disordered region; that stretch reads SAEPKGNESNTEVPKTGETSE.

The protein belongs to the GrpE family. Probable component of the PAM complex, at least composed of SSC1 (mtHsp70), MGE1, TIM44, PAM16/TIM16, PAM17 and PAM18/TIM14. Interacts with SSQ1.

Its subcellular location is the mitochondrion matrix. Essential component of the PAM complex, a complex required for the translocation of transit peptide-containing proteins from the inner membrane into the mitochondrial matrix in an ATP-dependent manner. Seems to control the nucleotide-dependent binding of mitochondrial HSP70 to substrate proteins. Binds ATP. Interacts with copper ions Cu(2+). This is GrpE protein homolog 1, mitochondrial from Arabidopsis thaliana (Mouse-ear cress).